The following is a 187-amino-acid chain: GTP cyclohydrolase 1 (187 aa).

Residues C81, H84, and C152 each contribute to the Zn(2+) site.

This sequence belongs to the GTP cyclohydrolase I family. In terms of assembly, toroid-shaped homodecamer, composed of two pentamers of five dimers.

It catalyses the reaction GTP + H2O = 7,8-dihydroneopterin 3'-triphosphate + formate + H(+). The protein operates within cofactor biosynthesis; 7,8-dihydroneopterin triphosphate biosynthesis; 7,8-dihydroneopterin triphosphate from GTP: step 1/1. In Pyrobaculum aerophilum (strain ATCC 51768 / DSM 7523 / JCM 9630 / CIP 104966 / NBRC 100827 / IM2), this protein is GTP cyclohydrolase 1.